Consider the following 817-residue polypeptide: MVRKLFNTSHKKELILDVDTTIVKIGTPKNVVLLTKWLDANGAIKEEGVFRVNGNTTTMEQIKKNFSQGKDDLTKYTSADIHSMAGCLKFILRELPEPIFTWDFYPIFIKIQCLQDESRKLFFLKMLIHGLPYTSRTLVFQLFGFLSKFSVHQDQNKMTPKNLATVFAPNVLRPKKEEDNFQLMNNQDSIGVIETLIEEFQYISNIQKNTLNSQEIKVKSVLPFDETTNAITQQSLVEDYLIAKANTPQESSSFKKNLPFKKGDIIKLLYIKNDGNFIGEINGITGNLSQTYVDIIDISELAEAFTLTPPPIPTLPIASTILHTPPTSSSSSSSSSSSSILLTDNQPKLCSSTPRINNSPSSFSPSLSSTTPQLLVQQSPRQSPRQIPSISLIVEPNNTNQPSFGHGTLQRTSTGYFSSKPLSISQPINMSKPTNMSPPTHHAMSMHNLPPSNTTRENHLPPLPTKPPPLTIPSSSSLPTTPIKQQPQQPIQQPLTPQNHHHHHHHNNLSSSVNTANTGNCANILSPNSDRYLSSRSQSSVHLSGSSSSSSSSSSSSSSSSSSSSSTSNRKFDFSLKSKSSKNSPSKNLPPQPTTTSTLTPPPPPTITTTTTTTTTTTTTTIATTPPPPSKPLPNIPVKDQQFNTLKRSTIEIPPPTITSTNINNNNNTINPRTLNYSFSSFSITYNNSQLGGQLSQEEPPGGVKSQSSYLDNNNLPSRNTNIPNLPPRPPPLNIPQQQQQYKPLPSPPQLQSPQSSLNQSLQIPLQQQQQVQQQKLTTHYILPPQNTNLSGKNLQRSSTSMLLNKLPPPPFSFNKN.

Residues 20 to 204 form the Rho-GAP domain; sequence TTIVKIGTPK…TLIEEFQYIS (185 aa). Residues 238-298 enclose the SH3 domain; it reads EDYLIAKANT…SQTYVDIIDI (61 aa). Low complexity predominate over residues 318-339; the sequence is ASTILHTPPTSSSSSSSSSSSS. Disordered regions lie at residues 318 to 638, 691 to 771, and 783 to 817; these read ASTI…NIPV, LGGQ…QQQQ, and LPPQNTNLSGKNLQRSSTSMLLNKLPPPPFSFNKN. A compositionally biased stretch (polar residues) spans 340-358; sequence ILLTDNQPKLCSSTPRINN. Residues 359-391 show a composition bias toward low complexity; it reads SPSSFSPSLSSTTPQLLVQQSPRQSPRQIPSIS. Polar residues predominate over residues 396–438; the sequence is PNNTNQPSFGHGTLQRTSTGYFSSKPLSISQPINMSKPTNMSP. Pro residues predominate over residues 461–471; it reads PPLPTKPPPLT. Low complexity predominate over residues 472 to 498; sequence IPSSSSLPTTPIKQQPQQPIQQPLTPQ. The span at 509-532 shows a compositional bias: polar residues; it reads LSSSVNTANTGNCANILSPNSDRY. Low complexity-rich tracts occupy residues 534 to 568, 577 to 587, and 607 to 624; these read SSRSQSSVHLSGSSSSSSSSSSSSSSSSSSSSSTS, KSKSSKNSPSK, and ITTTTTTTTTTTTTTIAT. Residues 625 to 635 show a composition bias toward pro residues; that stretch reads TPPPPSKPLPN. A compositionally biased stretch (polar residues) spans 705–722; that stretch reads KSQSSYLDNNNLPSRNTN. Positions 725–734 are enriched in pro residues; that stretch reads NLPPRPPPLN. Composition is skewed to low complexity over residues 735-744 and 752-771; these read IPQQQQQYKP and QSPQSSLNQSLQIPLQQQQQ. Residues 785 to 803 are compositionally biased toward polar residues; that stretch reads PQNTNLSGKNLQRSSTSML. A compositionally biased stretch (pro residues) spans 807–817; it reads LPPPPFSFNKN.

It is found in the cytoplasm. In terms of biological role, rho GTPase-activating protein involved in the signal transduction pathway. The polypeptide is Rho GTPase-activating protein gacII (gacII) (Dictyostelium discoideum (Social amoeba)).